A 770-amino-acid chain; its full sequence is MDVNEEAMAAHKRAFLDFLDQDVGKGVYMQAVRDMVQNKRHRLIIGMDDLRNHSLDLARRVIRSPAEYMQPASDAVTEVARNLDPKFLKEGQRVLVGFSGPFGFHRVTPRDLMSSFIGTMVCVEGIVTKCSLVRPKVVKSVHYCPATGGTLSREYRDITSFVGLPTGSVYPTRDENGNLLVTEYGMCEYKDHQTLSMQEVPENSAPGQLPRTVDIIVEDDLVDSCKPGDRVSIVGVYKALPGKSKGSVSGVFRTVLIANNVSLMNKEANAPVYTREDLKRMKEISRRNDTFDLLGNSLAPSIYGHLWIKKAVVLLMLGGVEKNLKNGTHLRGDINMMMVGDPSVAKSQLLRAVMNIAPLAISTTGRGSSGVGLTAAVTSDQETGERRLEAGAMVLADRGVVCIDEFDKMNDQDRVAIHEVMEQQTVTIAKAGIHASLNARCSVIAAANPIYGTYDRSLTPTKNIGLPDSLLSRFDLLFIVLDQMDPEIDRQISEHVARMHRYCTDDGGARSLDKTGYAEEDDGDVNAAIFVKYDRMLHGQDRRRGKKSKQDRLTVKFLKKYIHYAKNLIQPRLTDEASDHIATSYAELRDGGANAKSGGGTLPITARTLETIIRLSTAHAKMKLRHEVLKTDVEAALQVLNFAIYHKELTEMEEREQREMEMKQQADHDAGASGGNADEHRSSGNDPMDVDVGNASNDQDVPAERIEAFEAILGQHVLANHLDQISIDEIEQTVNREAAAPYNRRQVEFILERMQDANRIMIRDGIVRII.

The 207-residue stretch at 290-496 (TFDLLGNSLA…EIDRQISEHV (207 aa)) folds into the MCM domain. 340-347 (GDPSVAKS) is a binding site for ATP. Positions 472–475 (SRFD) match the Arginine finger motif. The segment covering 653–670 (EEREQREMEMKQQADHDA) has biased composition (basic and acidic residues). Positions 653–698 (EEREQREMEMKQQADHDAGASGGNADEHRSSGNDPMDVDVGNASND) are disordered.

It belongs to the MCM family. In terms of assembly, component of the minichromosome maintenance (MCM) complex, a heterotetramer composed of MCM2, MCM3, MCM4, MCM5, MCM6 and MCM7.

It is found in the nucleus. The enzyme catalyses ATP + H2O = ADP + phosphate + H(+). Functionally, probable component of the MCM2-7 complex (MCM complex) that may function as a DNA helicase and which is essential to undergo a single round of replication initiation and elongation per cell cycle in eukaryotic cells. This is DNA replication licensing factor MCM3 (MCM3) from Oryza sativa subsp. indica (Rice).